A 1377-amino-acid polypeptide reads, in one-letter code: Zinc finger MYM-type protein 2 (1377 aa).

Residues K48, K88, K98, and K104 each participate in a glycyl lysine isopeptide (Lys-Gly) (interchain with G-Cter in SUMO2) cross-link. 2 stretches are compositionally biased toward polar residues: residues 85–115 (TSSK…SVSE) and 127–138 (TNQGQEKNSSNF). The segment at 85 to 177 (TSSKNEELQG…GMGNSGITTE (93 aa)) is disordered. The span at 139-152 (IERRPPETKNRTND) shows a compositional bias: basic and acidic residues. A Glycyl lysine isopeptide (Lys-Gly) (interchain with G-Cter in SUMO2) cross-link involves residue K147. A compositionally biased stretch (polar residues) spans 153–164 (VDFSTSSFSRSK). Phosphoserine is present on S159. Glycyl lysine isopeptide (Lys-Gly) (interchain with G-Cter in SUMO2) cross-links involve residues K253 and K297. The disordered stretch occupies residues 273 to 305 (NGESATHHNPDSWISQSASFPRNQKQPGVDSLS). Over residues 284–298 (SWISQSASFPRNQKQ) the composition is skewed to polar residues. A Phosphoserine modification is found at S305. Residues K312, K325, K348, and K366 each participate in a glycyl lysine isopeptide (Lys-Gly) (interchain with G-Cter in SUMO2) cross-link. The MYM-type 1 zinc-finger motif lies at 327 to 363 (VKVTCANCKKPLQKGQTAYQRKGSAHLFCSTTCLSSF). The segment at 369-409 (PKKLCVMCKKDITTMKGTIVAQVDSSESFQEFCSTSCLSLY) adopts an MYM-type 2 zinc-finger fold. Glycyl lysine isopeptide (Lys-Gly) (interchain with G-Cter in SUMO2) cross-links involve residues K417, K441, K491, K503, K513, K529, and K532. MYM-type zinc fingers lie at residues 421–456 (NKSR…FNRY) and 463–502 (IMNC…VSEY). An MYM-type 5 zinc finger spans residues 533-570 (LTTCTGCRTQCRFFDMTQCIGPNGYMEPYCSTACMNSH). Residues K576, K603, K649, K658, K688, K700, and K709 each participate in a glycyl lysine isopeptide (Lys-Gly) (interchain with G-Cter in SUMO2) cross-link. Residues 636 to 671 (QLKCNYCKNSFCSKPEILEWENKVHQFCSKTCSDDY) form an MYM-type 6 zinc finger. MYM-type zinc fingers lie at residues 723-758 (RCVT…CKKF) and 764-799 (KAAR…LLRF). Residues K764, K788, K812, and K829 each participate in a glycyl lysine isopeptide (Lys-Gly) (interchain with G-Cter in SUMO2) cross-link. S838 and S958 each carry phosphoserine. 2 disordered regions span residues 983–1002 (LLKN…PYEP) and 1028–1064 (VFGE…SDNS). Basic residues predominate over residues 1039–1050 (PRSKKKGAKRKA). S1064 carries the phosphoserine modification. T1376 is modified (phosphothreonine).

Can form homodimers. May be a component of a BHC histone deacetylase complex that contains HDAC1, HDAC2, HMG20B/BRAF35, KDM1A, RCOR1/CoREST, PHF21A/BHC80, ZMYM2, ZNF217, ZMYM3, GSE1 and GTF2I. Interacts with FOXP1 and FOXP2.

The protein resides in the nucleus. Functionally, involved in the negative regulation of transcription. The polypeptide is Zinc finger MYM-type protein 2 (ZMYM2) (Homo sapiens (Human)).